The primary structure comprises 762 residues: Protein PHTF1 (762 aa).

The 145-residue stretch at 6 to 150 (RDAISWYQKK…VHCQIVSTQI (145 aa)) folds into the PHTF domain. 3 helical membrane passes run 77-97 (GLVR…VTSL), 99-119 (IFVW…LYFM), and 121-141 (PIVN…MGTV). A disordered region spans residues 152–188 (RPSGNNGNRRRRKLRKTVNGDGSRENGNNSSDKARGV). Residues Asn179, Asn180, and Asn197 are each glycosylated (N-linked (GlcNAc...) asparagine). Residues Ser272, Ser276, Ser277, Ser334, and Ser336 each carry the phosphoserine modification. Disordered regions lie at residues 344-379 (SAAF…SETE) and 393-415 (RSSV…TKRD). Over residues 348 to 361 (SQGSRSGMSGGSRS) the composition is skewed to low complexity. Over residues 365-376 (LRRDSESTRHDS) the composition is skewed to basic and acidic residues. N-linked (GlcNAc...) asparagine glycosylation occurs at Asn431. Helical transmembrane passes span 473–493 (GVGY…FPFL), 512–532 (EILT…LSII), 611–631 (VVVS…CAQV), and 645–665 (WEFL…ASLG). Residues Asn674 and Asn733 are each glycosylated (N-linked (GlcNAc...) asparagine). A helical transmembrane segment spans residues 737 to 757 (VVILSAVSGVISDLLGFNIRL).

In terms of assembly, interacts with FEM1B.

It is found in the endoplasmic reticulum membrane. It localises to the golgi apparatus. Its subcellular location is the cis-Golgi network membrane. The protein is Protein PHTF1 (PHTF1) of Bos taurus (Bovine).